A 56-amino-acid polypeptide reads, in one-letter code: Male determiner protein Yob (56 aa).

Its function is as follows. Male determiner protein (M-factor) that controls male somatic sexual differentiation. Acts as a dominant factor that regulates the mRNA splicing of doublesex (dsx) transcripts and promotes expression of male splice forms of dsx. The chain is Male determiner protein Yob from Anopheles gambiae (African malaria mosquito).